The primary structure comprises 67 residues: Large ribosomal subunit protein bL35 (67 aa).

The disordered stretch occupies residues 1–41 (MPKMKTHRGAAKRFKKTGTGKLKRSHAYTSHMFRHKSQKQK).

Belongs to the bacterial ribosomal protein bL35 family.

This chain is Large ribosomal subunit protein bL35, found in Shouchella clausii (strain KSM-K16) (Alkalihalobacillus clausii).